We begin with the raw amino-acid sequence, 338 residues long: RNA 3'-terminal phosphate cyclase (338 aa).

Residues Gln103 and 283-287 each bind ATP; that span reads YLADQ. His308 serves as the catalytic Tele-AMP-histidine intermediate.

It belongs to the RNA 3'-terminal cyclase family. Type 1 subfamily.

It is found in the cytoplasm. The enzyme catalyses a 3'-end 3'-phospho-ribonucleotide-RNA + ATP = a 3'-end 2',3'-cyclophospho-ribonucleotide-RNA + AMP + diphosphate. Functionally, catalyzes the conversion of 3'-phosphate to a 2',3'-cyclic phosphodiester at the end of RNA. The mechanism of action of the enzyme occurs in 3 steps: (A) adenylation of the enzyme by ATP; (B) transfer of adenylate to an RNA-N3'P to produce RNA-N3'PP5'A; (C) and attack of the adjacent 2'-hydroxyl on the 3'-phosphorus in the diester linkage to produce the cyclic end product. The biological role of this enzyme is unknown but it is likely to function in some aspects of cellular RNA processing. The chain is RNA 3'-terminal phosphate cyclase from Escherichia coli O7:K1 (strain IAI39 / ExPEC).